The following is a 360-amino-acid chain: (+)-6a-hydroxymaackiain 3-O-methyltransferase 2 (360 aa).

Residues 202 to 205 (VAGG), aspartate 226, 226 to 227 (DQ), 246 to 247 (DM), and lysine 260 contribute to the S-adenosyl-L-methionine site. Catalysis depends on histidine 264, which acts as the Proton acceptor.

This sequence belongs to the class I-like SAM-binding methyltransferase superfamily. Cation-independent O-methyltransferase family. COMT subfamily.

The catalysed reaction is (+)-6a-hydroxymaackiain + S-adenosyl-L-methionine = (+)-pisatin + S-adenosyl-L-homocysteine + H(+). Its function is as follows. 3-O-methyltransferase involved in the phytoalexin pisatin biosynthesis. Can use (+)-6a-hydroxymaackiain, (+)-maackiain and with a lower activity (+)-medicarpin and 2,7,4'-trihydroxyisoflavanone as substrates, but not (-)-6a-hydroxymaackiain, daidzein, formononetin or isoliquiritigenin. In Pisum sativum (Garden pea), this protein is (+)-6a-hydroxymaackiain 3-O-methyltransferase 2 (HMM2).